The sequence spans 185 residues: Transcription termination/antitermination protein NusG (185 aa).

The KOW domain maps to 134-162 (PGQMVRVIDGPFNDFDGLVEEVNYEKNRL).

It belongs to the NusG family.

Participates in transcription elongation, termination and antitermination. The chain is Transcription termination/antitermination protein NusG from Xylella fastidiosa (strain Temecula1 / ATCC 700964).